The sequence spans 354 residues: Rhodopsin (354 aa).

At 1 to 36 the chain is on the extracellular side; the sequence is MNGTEGPNFYIPMSNKTGVVRSPFEYPQYYLAEPWQ. Residues Asn2 and Asn15 are each glycosylated (N-linked (GlcNAc...) asparagine). The chain crosses the membrane as a helical span at residues 37–61; sequence YSILCAYMFLLILLGFPINFMTLYV. Residues 62–73 lie on the Cytoplasmic side of the membrane; sequence TIQHKKLRTPLN. Residues 74 to 96 traverse the membrane as a helical segment; that stretch reads YILLNLAFANHFMVLCGFTVTMY. The Extracellular portion of the chain corresponds to 97 to 110; it reads SSMNGYFILGATGC. The cysteines at positions 110 and 187 are disulfide-linked. The helical transmembrane segment at 111-133 threads the bilayer; that stretch reads YVEGFFATLGGEIALWSLVVLAI. A 'Ionic lock' involved in activated form stabilization motif is present at residues 134–136; the sequence is ERY. At 134–152 the chain is on the cytoplasmic side; that stretch reads ERYVVVCKPMSNFRFSENH. A helical transmembrane segment spans residues 153-173; sequence AVMGVAFTWIMALSCAVPPLL. The Extracellular segment spans residues 174–202; it reads GWSRYIPEGMQCSCGVDYYTLKPEVNNES. Residues 203 to 224 form a helical membrane-spanning segment; the sequence is FVIYMFVVHFTIPLIIIFFCYG. Residues 225-252 are Cytoplasmic-facing; sequence RLVCTVKEAAAQQQESATTQKAEKEVTR. The helical transmembrane segment at 253 to 274 threads the bilayer; sequence MVIIMVVFFLICWVPYASVAFF. Residues 275-286 lie on the Extracellular side of the membrane; sequence IFSNQGSEFGPI. The chain crosses the membrane as a helical span at residues 287–308; that stretch reads FMTVPAFFAKSSSIYNPVIYIM. An N6-(retinylidene)lysine modification is found at Lys296. Residues 309 to 354 lie on the Cytoplasmic side of the membrane; sequence LNKQFRNCMITTLCCGKNPFGEDDASSAATSKTEASSVSSSQVSPA. S-palmitoyl cysteine attachment occurs at residues Cys322 and Cys323. Residues 331-354 are disordered; the sequence is DDASSAATSKTEASSVSSSQVSPA. A compositionally biased stretch (low complexity) spans 334–354; the sequence is SSAATSKTEASSVSSSQVSPA.

Belongs to the G-protein coupled receptor 1 family. Opsin subfamily. Contains one covalently linked retinal chromophore. Upon light absorption, the covalently bound 11-cis-retinal is converted to all-trans-retinal. After hydrolysis of the Schiff base and release of the covalently bound all-trans-retinal, active rhodopsin is regenerated by binding of a fresh molecule of 11-cis-retinal.

It localises to the membrane. Its subcellular location is the cell projection. It is found in the cilium. The protein resides in the photoreceptor outer segment. In terms of biological role, photoreceptor required for image-forming vision at low light intensity. Required for photoreceptor cell viability after birth. Light-induced isomerization of 11-cis to all-trans retinal triggers a conformational change that activates signaling via G-proteins. Subsequent receptor phosphorylation mediates displacement of the bound G-protein alpha subunit by arrestin and terminates signaling. This chain is Rhodopsin (RHO), found in Bufo bufo (European toad).